The primary structure comprises 104 residues: L-rhamnose mutarotase (104 aa).

Residue Y18 participates in substrate binding. H22 acts as the Proton donor in catalysis. Substrate-binding positions include Y41 and 76–77; that span reads WW.

It belongs to the rhamnose mutarotase family. In terms of assembly, homodimer.

The protein resides in the cytoplasm. It carries out the reaction alpha-L-rhamnose = beta-L-rhamnose. It functions in the pathway carbohydrate metabolism; L-rhamnose metabolism. Functionally, involved in the anomeric conversion of L-rhamnose. This Salmonella arizonae (strain ATCC BAA-731 / CDC346-86 / RSK2980) protein is L-rhamnose mutarotase.